Consider the following 260-residue polypeptide: Nuclear receptor subfamily 0 group B member 2 (260 aa).

The NR LBD domain maps to 16 to 260 (SHPTILYTLL…ELLEDMLLLR (245 aa)). R57 bears the Symmetric dimethylarginine; by PRMT5 mark.

It belongs to the nuclear hormone receptor family. NR0 subfamily. Heterodimer; efficient DNA binding requires dimerization with another bHLH protein. Interacts (via N-terminus) with NEUROD1 (via N-terminus and C-terminus). Interacts with ID2. Interacts with NR1I3 and EID1. Interacts with RARA, RXRA, THRB, NR5A1, NR5A2, PPARA and PPARG. Interacts with RORG, NFIL3, NR1D1 and BHLHE41. Interacts with HNF4A; the resulting heterodimer is transcriptionally inactive. Interacts with DDX3X; this interaction disrupts the interaction between HNF4 and NR0B2/SHP that forms inactive heterodimers and enhances the formation of active HNF4 homodimers. Post-translationally, arginine methylation by PRMT5 enhances repression activity of metabolic genes in liver in response to bile acid signaling, by increasing interaction with cofactors. In terms of tissue distribution, detected in kidney, testis, heart and liver.

It is found in the cytoplasm. Its subcellular location is the nucleus. In terms of biological role, transcriptional regulator that acts as a negative regulator of receptor-dependent signaling pathways. Specifically inhibits transactivation of the nuclear receptor with which it interacts. Inhibits transcriptional activity of NEUROD1 on E-box-containing promoter by interfering with the coactivation function of the p300/CBP-mediated transcription complex for NEUROD1. Essential component of the liver circadian clock which via its interaction with NR1D1 and RORG regulates NPAS2-mediated hepatic lipid metabolism. Regulates the circadian expression of cytochrome P450 (CYP) enzymes. Represses: NR5A2 and HNF4A to down-regulate CYP2C38, NFLI3 to up-regulate CYP2A5, BHLHE41/HNF1A axis to up-regulate CYP1A2, CYP2E1 and CYP3A11, and NR1D1 to up-regulate CYP2B10, CYP4A10 and CYP4A14. The sequence is that of Nuclear receptor subfamily 0 group B member 2 (Nr0b2) from Rattus norvegicus (Rat).